Reading from the N-terminus, the 562-residue chain is Oxygen-dependent choline dehydrogenase (562 aa).

Asp4–Glu33 lines the FAD pocket. His473 (proton acceptor) is an active-site residue.

This sequence belongs to the GMC oxidoreductase family. The cofactor is FAD.

The protein localises to the cell membrane. It catalyses the reaction choline + A = betaine aldehyde + AH2. It carries out the reaction betaine aldehyde + NAD(+) + H2O = glycine betaine + NADH + 2 H(+). Its pathway is amine and polyamine biosynthesis; betaine biosynthesis via choline pathway; betaine aldehyde from choline (cytochrome c reductase route): step 1/1. Functionally, involved in the biosynthesis of the osmoprotectant glycine betaine. Catalyzes the oxidation of choline to betaine aldehyde and betaine aldehyde to glycine betaine at the same rate. The sequence is that of Oxygen-dependent choline dehydrogenase from Escherichia coli O157:H7.